Reading from the N-terminus, the 185-residue chain is Peptidyl-tRNA hydrolase (185 aa).

A tRNA-binding site is contributed by tyrosine 14. Residue histidine 19 is the Proton acceptor of the active site. Residues tyrosine 64, asparagine 66, and asparagine 112 each contribute to the tRNA site.

This sequence belongs to the PTH family. Monomer.

It is found in the cytoplasm. It catalyses the reaction an N-acyl-L-alpha-aminoacyl-tRNA + H2O = an N-acyl-L-amino acid + a tRNA + H(+). In terms of biological role, hydrolyzes ribosome-free peptidyl-tRNAs (with 1 or more amino acids incorporated), which drop off the ribosome during protein synthesis, or as a result of ribosome stalling. Its function is as follows. Catalyzes the release of premature peptidyl moieties from peptidyl-tRNA molecules trapped in stalled 50S ribosomal subunits, and thus maintains levels of free tRNAs and 50S ribosomes. The protein is Peptidyl-tRNA hydrolase of Lactobacillus delbrueckii subsp. bulgaricus (strain ATCC 11842 / DSM 20081 / BCRC 10696 / JCM 1002 / NBRC 13953 / NCIMB 11778 / NCTC 12712 / WDCM 00102 / Lb 14).